We begin with the raw amino-acid sequence, 239 residues long: MIVFILLSLAAVLQQSVADVDFQSESPRRTEKQTEIVDMHNSFRRSVNPTARNMLKMEWYPEAADNAERWAYQCIYDHSANYERVIGGIQCGENIYKSSNPRAWSEMIQDWYDEYKNFVYGVGANPPGSMIGHYTQIVWYKSYRIGCAAAYCPSYPYNYFYVCQYCPVGNMEGLTATPYTSGPTCADCPSHCDDGLCTNPCPINNVFTNCDSLLQQSSCEDSYITTNCGASCFCQDKII.

The N-terminal stretch at 1 to 18 is a signal peptide; sequence MIVFILLSLAAVLQQSVA. The SCP domain occupies 37–165; that stretch reads VDMHNSFRRS…PYNYFYVCQY (129 aa). 7 disulfides stabilise this stretch: Cys74–Cys152, Cys91–Cys166, Cys147–Cys163, Cys185–Cys192, Cys188–Cys197, Cys210–Cys228, and Cys219–Cys232. Residues 201-234 form the ShKT domain; that stretch reads CPINNVFTNCDSLLQQSSCEDSYITTNCGASCFC.

It belongs to the CRISP family. As to expression, expressed by the venom gland.

It localises to the secreted. Its function is as follows. Blocks contraction of smooth muscle elicited by high potassium-induced depolarization, but does not block caffeine-stimulated contraction. May target voltage-gated calcium channels on smooth muscle. The chain is Cysteine-rich venom protein from Cerberus rynchops (Dog-faced water snake).